The primary structure comprises 101 residues: NADH-quinone oxidoreductase subunit K (101 aa).

Helical transmembrane passes span 4 to 24, 29 to 49, and 61 to 81; these read LAHY…GIFL, IIII…NFVA, and IFVF…LAIL.

This sequence belongs to the complex I subunit 4L family. NDH-1 is composed of 14 different subunits. Subunits NuoA, H, J, K, L, M, N constitute the membrane sector of the complex.

The protein resides in the cell inner membrane. The catalysed reaction is a quinone + NADH + 5 H(+)(in) = a quinol + NAD(+) + 4 H(+)(out). Its function is as follows. NDH-1 shuttles electrons from NADH, via FMN and iron-sulfur (Fe-S) centers, to quinones in the respiratory chain. The immediate electron acceptor for the enzyme in this species is believed to be ubiquinone. Couples the redox reaction to proton translocation (for every two electrons transferred, four hydrogen ions are translocated across the cytoplasmic membrane), and thus conserves the redox energy in a proton gradient. This is NADH-quinone oxidoreductase subunit K from Burkholderia vietnamiensis (strain G4 / LMG 22486) (Burkholderia cepacia (strain R1808)).